The following is a 342-amino-acid chain: Succinylglutamate desuccinylase (342 aa).

Zn(2+) is bound by residues histidine 63, glutamate 66, and histidine 155. The active site involves glutamate 219.

This sequence belongs to the AspA/AstE family. Succinylglutamate desuccinylase subfamily. Requires Zn(2+) as cofactor.

It carries out the reaction N-succinyl-L-glutamate + H2O = L-glutamate + succinate. Its pathway is amino-acid degradation; L-arginine degradation via AST pathway; L-glutamate and succinate from L-arginine: step 5/5. Functionally, transforms N(2)-succinylglutamate into succinate and glutamate. This is Succinylglutamate desuccinylase from Vibrio vulnificus (strain CMCP6).